A 346-amino-acid chain; its full sequence is 2,5-dichlorohydroquinone reductive dechlorinase (346 aa).

The GST N-terminal domain maps to 43–154 (PRFELFHFVF…YLCDALSGGT (112 aa)). The GST C-terminal domain maps to 189-335 (DRRPESMQAV…AIIQWPGHPP (147 aa)).

It belongs to the GST superfamily.

It carries out the reaction 2,5-dichlorohydroquinone + 2 glutathione = chlorohydroquinone + glutathione disulfide + chloride + H(+). The enzyme catalyses chlorohydroquinone + 2 glutathione = hydroquinone + glutathione disulfide + chloride + H(+). It functions in the pathway xenobiotic degradation; gamma-hexachlorocyclohexane degradation. Its function is as follows. Catalyzes the degradation of 2,5-dichlorohydroquinone (2,5-DCHQ) into hydroquinone (HQ) via chlorohydroquinone (CHQ). Is involved in the degradation pathway that allows S.japonicum UT26 to grow on gamma-hexachlorocyclohexane (gamma-HCH or lindane) as the sole source of carbon and energy. However, the conversion of CHQ to HQ by LinD seems not to be essential for this degradation pathway, because the conversion rate of CHQ to HQ is much lower than that of 2,5-DCHQ to CHQ. CHQ is more efficiently degraded by LinE in strain UT26. The protein is 2,5-dichlorohydroquinone reductive dechlorinase of Sphingobium indicum (strain DSM 16413 / CCM 7287 / MTCC 6362 / UT26 / NBRC 101211 / UT26S) (Sphingobium japonicum).